Reading from the N-terminus, the 184-residue chain is 2-C-methyl-D-erythritol 2,4-cyclodiphosphate synthase (184 aa).

The a divalent metal cation site is built by D17 and H19. Residues 17–19 and 47–48 each bind 4-CDP-2-C-methyl-D-erythritol 2-phosphate; these read DVH and HS. H55 lines the a divalent metal cation pocket. 4-CDP-2-C-methyl-D-erythritol 2-phosphate is bound by residues 74 to 78, F152, and R155; that span reads FPNTD.

Belongs to the IspF family. In terms of assembly, homotrimer. A divalent metal cation is required as a cofactor.

It catalyses the reaction 4-CDP-2-C-methyl-D-erythritol 2-phosphate = 2-C-methyl-D-erythritol 2,4-cyclic diphosphate + CMP. The protein operates within isoprenoid biosynthesis; isopentenyl diphosphate biosynthesis via DXP pathway; isopentenyl diphosphate from 1-deoxy-D-xylulose 5-phosphate: step 4/6. Functionally, involved in the biosynthesis of isopentenyl diphosphate (IPP) and dimethylallyl diphosphate (DMAPP), two major building blocks of isoprenoid compounds. Catalyzes the conversion of 4-diphosphocytidyl-2-C-methyl-D-erythritol 2-phosphate (CDP-ME2P) to 2-C-methyl-D-erythritol 2,4-cyclodiphosphate (ME-CPP) with a corresponding release of cytidine 5-monophosphate (CMP). The polypeptide is 2-C-methyl-D-erythritol 2,4-cyclodiphosphate synthase (Anaplasma marginale (strain St. Maries)).